A 345-amino-acid polypeptide reads, in one-letter code: Fe(3+) ions import ATP-binding protein FbpC (345 aa).

The ABC transporter domain occupies 4–236 (LELHGIGKSY…PVDEPTASFL (233 aa)). 36–43 (GPSGSGKT) lines the ATP pocket.

Belongs to the ABC transporter superfamily. Fe(3+) ion importer (TC 3.A.1.10) family. The complex is composed of two ATP-binding proteins (FbpC), two transmembrane proteins (FbpB) and a solute-binding protein (FbpA).

Its subcellular location is the cell inner membrane. It carries out the reaction Fe(3+)(out) + ATP + H2O = Fe(3+)(in) + ADP + phosphate + H(+). Functionally, part of the ABC transporter complex FbpABC involved in Fe(3+) ions import. Responsible for energy coupling to the transport system. The protein is Fe(3+) ions import ATP-binding protein FbpC of Serratia marcescens.